A 166-amino-acid chain; its full sequence is Regulatory protein RecX (166 aa).

It belongs to the RecX family.

It is found in the cytoplasm. In terms of biological role, modulates RecA activity. The polypeptide is Regulatory protein RecX (Salmonella paratyphi C (strain RKS4594)).